The chain runs to 64 residues: Large ribosomal subunit protein bL35 (64 aa).

Residues 1-29 form a disordered region; that stretch reads MPKMKTHSGAKKRFKLTGSGKLRRQQANR.

Belongs to the bacterial ribosomal protein bL35 family.

This Pseudarthrobacter chlorophenolicus (strain ATCC 700700 / DSM 12829 / CIP 107037 / JCM 12360 / KCTC 9906 / NCIMB 13794 / A6) (Arthrobacter chlorophenolicus) protein is Large ribosomal subunit protein bL35.